The following is a 548-amino-acid chain: Membrane protein insertase YidC (548 aa).

The helical transmembrane segment at 6-26 (NLFLIAFLFVSFMIWQAWQTD) threads the bilayer. A disordered region spans residues 30–53 (QPLQTQTTQNTTSAAGDAVNQGVP). Transmembrane regions (helical) follow at residues 345–365 (KFLHGFIGNWGFSIIVITFIV), 420–440 (LGGCLPLVIQMPIFLALYYML), 458–478 (LAAQDPYYILPILMGVTMFFI), and 499–519 (PVIFTVFFLWFPSGLVLYYIV).

The protein belongs to the OXA1/ALB3/YidC family. Type 1 subfamily. In terms of assembly, interacts with the Sec translocase complex via SecD. Specifically interacts with transmembrane segments of nascent integral membrane proteins during membrane integration.

It localises to the cell inner membrane. Its function is as follows. Required for the insertion and/or proper folding and/or complex formation of integral membrane proteins into the membrane. Involved in integration of membrane proteins that insert both dependently and independently of the Sec translocase complex, as well as at least some lipoproteins. Aids folding of multispanning membrane proteins. The chain is Membrane protein insertase YidC from Erwinia tasmaniensis (strain DSM 17950 / CFBP 7177 / CIP 109463 / NCPPB 4357 / Et1/99).